The following is a 291-amino-acid chain: 4-hydroxy-tetrahydrodipicolinate synthase (291 aa).

Thr-45 contacts pyruvate. The active-site Proton donor/acceptor is the Tyr-133. Lys-161 functions as the Schiff-base intermediate with substrate in the catalytic mechanism. Ile-203 serves as a coordination point for pyruvate.

This sequence belongs to the DapA family. In terms of assembly, homotetramer; dimer of dimers.

It localises to the cytoplasm. It catalyses the reaction L-aspartate 4-semialdehyde + pyruvate = (2S,4S)-4-hydroxy-2,3,4,5-tetrahydrodipicolinate + H2O + H(+). The protein operates within amino-acid biosynthesis; L-lysine biosynthesis via DAP pathway; (S)-tetrahydrodipicolinate from L-aspartate: step 3/4. Functionally, catalyzes the condensation of (S)-aspartate-beta-semialdehyde [(S)-ASA] and pyruvate to 4-hydroxy-tetrahydrodipicolinate (HTPA). In Acidithiobacillus ferrooxidans (strain ATCC 23270 / DSM 14882 / CIP 104768 / NCIMB 8455) (Ferrobacillus ferrooxidans (strain ATCC 23270)), this protein is 4-hydroxy-tetrahydrodipicolinate synthase.